The primary structure comprises 122 residues: Small ribosomal subunit protein uS13 (122 aa).

Residues 98–122 form a disordered region; sequence VRGQRTHTNARTRKGPAKAIAGKKK.

Belongs to the universal ribosomal protein uS13 family. As to quaternary structure, part of the 30S ribosomal subunit. Forms a loose heterodimer with protein S19. Forms two bridges to the 50S subunit in the 70S ribosome.

Located at the top of the head of the 30S subunit, it contacts several helices of the 16S rRNA. In the 70S ribosome it contacts the 23S rRNA (bridge B1a) and protein L5 of the 50S subunit (bridge B1b), connecting the 2 subunits; these bridges are implicated in subunit movement. Contacts the tRNAs in the A and P-sites. This is Small ribosomal subunit protein uS13 from Ruegeria pomeroyi (strain ATCC 700808 / DSM 15171 / DSS-3) (Silicibacter pomeroyi).